A 222-amino-acid chain; its full sequence is Bone marrow proteoglycan (222 aa).

The first 16 residues, 1–16 (MKLPLLLALLFGAVSA), serve as a signal peptide directing secretion. A propeptide spans 17 to 105 (LHLRSETSTF…VKVVGIPGCQ (89 aa)) (acidic). Residue threonine 23 is glycosylated (O-linked (GalNAc...) threonine; partial). A glycan (O-linked (GalNAc...) serine) is linked at serine 24. The O-linked (GalNAc...) threonine glycan is linked to threonine 25. The segment at 25 to 75 (TFETPLGAKTLPEDEETPEQEMEETPCRELEEEEEWGSGSEDASKKDGAVE) is disordered. The O-linked (GalNAc...) threonine; partial glycan is linked to threonine 34. The span at 37-60 (EDEETPEQEMEETPCRELEEEEEW) shows a compositional bias: acidic residues. Residue serine 62 is glycosylated (O-linked (Xyl...) (chondroitin sulfate) serine). N-linked (GlcNAc...) asparagine glycosylation is present at asparagine 86. The region spanning 104 to 222 (CQTCRYLLVR…LRRLPFICSY (119 aa)) is the C-type lectin domain. Intrachain disulfides connect cysteine 125–cysteine 220 and cysteine 197–cysteine 212.

In terms of assembly, in pregnancy serum, the proform exists as a disulfide-linked 2:2 heterotetramer with PAPPA, as a disulfide-linked 2:2 heterotetramer with AGT, and as a complex (probably a 2:2:2 heterohexamer) with AGT and C3dg. In terms of processing, nitrated. In terms of tissue distribution, detected in plasma and urine (at protein level). Detected in placenta (at protein level). High levels of the proform in placenta and pregnancy serum; in placenta, localized to X cells of septa and anchoring villi. Lower levels in a variety of other tissues including kidney, myometrium, endometrium, ovaries, breast, prostate, bone marrow and colon.

Its subcellular location is the secreted. It is found in the cytoplasmic vesicle. The protein resides in the secretory vesicle. Functionally, cytotoxin and helminthotoxin. Also induces non-cytolytic histamine release from human basophils. Involved in antiparasitic defense mechanisms and immune hypersensitivity reactions. The proform acts as a proteinase inhibitor, reducing the activity of PAPPA. The chain is Bone marrow proteoglycan (PRG2) from Homo sapiens (Human).